Consider the following 152-residue polypeptide: Deoxyuridine 5'-triphosphate nucleotidohydrolase (152 aa).

Substrate-binding positions include 71–73 (RSG), Asn-84, 88–90 (LID), and Met-98.

It belongs to the dUTPase family. Requires Mg(2+) as cofactor.

The catalysed reaction is dUTP + H2O = dUMP + diphosphate + H(+). It participates in pyrimidine metabolism; dUMP biosynthesis; dUMP from dCTP (dUTP route): step 2/2. In terms of biological role, this enzyme is involved in nucleotide metabolism: it produces dUMP, the immediate precursor of thymidine nucleotides and it decreases the intracellular concentration of dUTP so that uracil cannot be incorporated into DNA. In Shewanella denitrificans (strain OS217 / ATCC BAA-1090 / DSM 15013), this protein is Deoxyuridine 5'-triphosphate nucleotidohydrolase.